A 50-amino-acid chain; its full sequence is Protein PsbN (50 aa).

Residues 14–34 form a helical membrane-spanning segment; it reads VAVTILAILLALTGFGLWTAF.

It belongs to the PsbN family.

Its subcellular location is the cellular thylakoid membrane. Functionally, may play a role in photosystem I and II biogenesis. The sequence is that of Protein PsbN from Prochlorococcus marinus (strain MIT 9312).